The following is a 1127-amino-acid chain: Disease resistance protein RPS6 (1127 aa).

An N-acetylmethionine modification is found at Met1. The TIR domain occupies 12 to 176 (WSYHVFPSFS…EIANDILGKM (165 aa)). Glu87 is an active-site residue. LRR repeat units lie at residues 197 to 221 (MSSL…GIGK), 540 to 563 (IDET…LFLK), 587 to 609 (PSRL…NFHP), 610 to 632 (ENLV…VHSL), 633 to 656 (AGLR…SMAT), 658 to 679 (LETL…IQYL), 680 to 704 (NKLN…NLKS), 766 to 790 (SPTL…IQNL), 791 to 813 (YQLE…GINL), 814 to 834 (DSLI…PDIS), and 835 to 857 (TNIS…IEKL).

Interacts with EDS1. As to expression, ubiquitous.

It carries out the reaction NAD(+) + H2O = ADP-D-ribose + nicotinamide + H(+). In terms of biological role, disease resistance (R) protein that specifically recognizes the hopA1 type III effector avirulence protein from Pseudomonas syringae. Resistance proteins guard the plant against pathogens that contain an appropriate avirulence protein via an indirect interaction with this avirulence protein. That triggers a defense system including the hypersensitive response, which restricts the pathogen growth. This chain is Disease resistance protein RPS6, found in Arabidopsis thaliana (Mouse-ear cress).